Consider the following 300-residue polypeptide: 2-dehydropantoate 2-reductase (300 aa).

NADP(+) is bound by residues 7–12 (GAGAIG), K74, N99, and A123. Residue K179 is the Proton donor of the active site. Residues K179, N183, N187, N197, and 246–249 (NYNS) each bind substrate. NADP(+) is bound at residue E261.

Belongs to the ketopantoate reductase family.

The protein localises to the cytoplasm. It catalyses the reaction (R)-pantoate + NAD(+) = 2-dehydropantoate + NADH + H(+). The catalysed reaction is (R)-pantoate + NADP(+) = 2-dehydropantoate + NADPH + H(+). The protein operates within cofactor biosynthesis; coenzyme A biosynthesis. In terms of biological role, catalyzes the NAD(P)H-dependent reduction of ketopantoate into pantoic acid. The chain is 2-dehydropantoate 2-reductase (apbA) from Pyrococcus abyssi (strain GE5 / Orsay).